Reading from the N-terminus, the 277-residue chain is Probable ABC transporter permease protein y4oR (277 aa).

The next 7 helical transmembrane spans lie at Leu15 to Val35, Val79 to Leu99, Leu109 to Tyr129, Thr140 to Met160, Ile189 to Val209, Phe213 to Gly233, and Trp242 to Ile262. The 190-residue stretch at Ile74 to Met263 folds into the ABC transmembrane type-1 domain.

Belongs to the binding-protein-dependent transport system permease family. MalFG subfamily.

It is found in the cell inner membrane. Its function is as follows. Probably part of the binding-protein-dependent transport system y4oPQRS. This system probably transports a sugar-like molecule. Probably responsible for the translocation of the substrate across the membrane. The sequence is that of Probable ABC transporter permease protein y4oR from Sinorhizobium fredii (strain NBRC 101917 / NGR234).